The chain runs to 381 residues: Carbamoyl phosphate synthase small chain (381 aa).

Positions 1 to 192 are CPSase; that stretch reads MSKPAILALE…SGYADVSQGD (192 aa). L-glutamine-binding residues include S47, G244, and G246. A Glutamine amidotransferase type-1 domain is found at 196 to 381; the sequence is HVVAYDYGMK…RFVEMMRHRR (186 aa). The active-site Nucleophile is C272. L273, Q276, N314, G316, and F317 together coordinate L-glutamine. Residues H356 and E358 contribute to the active site.

The protein belongs to the CarA family. In terms of assembly, composed of two chains; the small (or glutamine) chain promotes the hydrolysis of glutamine to ammonia, which is used by the large (or ammonia) chain to synthesize carbamoyl phosphate. Tetramer of heterodimers (alpha,beta)4.

It catalyses the reaction hydrogencarbonate + L-glutamine + 2 ATP + H2O = carbamoyl phosphate + L-glutamate + 2 ADP + phosphate + 2 H(+). It carries out the reaction L-glutamine + H2O = L-glutamate + NH4(+). It functions in the pathway amino-acid biosynthesis; L-arginine biosynthesis; carbamoyl phosphate from bicarbonate: step 1/1. It participates in pyrimidine metabolism; UMP biosynthesis via de novo pathway; (S)-dihydroorotate from bicarbonate: step 1/3. In terms of biological role, small subunit of the glutamine-dependent carbamoyl phosphate synthetase (CPSase). CPSase catalyzes the formation of carbamoyl phosphate from the ammonia moiety of glutamine, carbonate, and phosphate donated by ATP, constituting the first step of 2 biosynthetic pathways, one leading to arginine and/or urea and the other to pyrimidine nucleotides. The small subunit (glutamine amidotransferase) binds and cleaves glutamine to supply the large subunit with the substrate ammonia. The protein is Carbamoyl phosphate synthase small chain of Halomonas eurihalina.